The primary structure comprises 41 residues: Large ribosomal subunit protein bL36 (41 aa).

The protein belongs to the bacterial ribosomal protein bL36 family.

This is Large ribosomal subunit protein bL36 from Bartonella bacilliformis (strain ATCC 35685 / KC583 / Herrer 020/F12,63).